The primary structure comprises 458 residues: Transmembrane protein 143 (458 aa).

2 helical membrane-spanning segments follow: residues 277-297 and 298-318; these read LLNL…GMVI and LSDL…FMGV. Position 329 is a phosphoserine (serine 329).

Its subcellular location is the membrane. The protein is Transmembrane protein 143 (Tmem143) of Mus musculus (Mouse).